Consider the following 311-residue polypeptide: Probable manganese-dependent inorganic pyrophosphatase (311 aa).

Positions 9, 13, 15, 75, 97, and 149 each coordinate Mn(2+).

It belongs to the PPase class C family. The cofactor is Mn(2+).

It is found in the cytoplasm. The catalysed reaction is diphosphate + H2O = 2 phosphate + H(+). This is Probable manganese-dependent inorganic pyrophosphatase from Lactobacillus helveticus (strain DPC 4571).